An 80-amino-acid chain; its full sequence is Secreted transmembrane peptide 3 (80 aa).

The signal sequence occupies residues 1-27 (MGLKMSSNALLLSLFLLLLCLFSEIGG). The tract at residues 44 to 80 (IATPPSLTCGGQRLGGPQPRLSPCPRPRPRPRPRTGS) is disordered. Positions 62–80 (PRLSPCPRPRPRPRPRTGS) match the SCOOP motif motif. Residues 70–80 (PRPRPRPRTGS) are compositionally biased toward basic residues.

This sequence belongs to the serine rich endogenous peptide (SCOOP) phytocytokine family. Interacts with MIK2 (via extracellular leucine-rich repeat domain); this interaction triggers the formation of complex between MIK2 and the BAK1/SERK3 and SERK4 coreceptors, and subsequent BAK1 activation by phosphorylation. Mostly expressed in leaves, and, to a lower extent, in roots, stems, siliques, seeds and flowers.

It localises to the cell membrane. The protein resides in the secreted. It is found in the extracellular space. Its subcellular location is the apoplast. The protein localises to the endoplasmic reticulum. It localises to the golgi apparatus. Brassicaceae-specific phytocytokine (plant endogenous peptide released into the apoplast) perceived by MIK2 in a BAK1/SERK3 and SERK4 coreceptors-dependent manner, that modulates various physiological and antimicrobial processes including growth prevention and reactive oxygen species (ROS) response regulation. The protein is Secreted transmembrane peptide 3 of Arabidopsis thaliana (Mouse-ear cress).